The sequence spans 449 residues: Probable protoheme IX farnesyltransferase, mitochondrial (449 aa).

Over residues Thr-99–Gln-138 the composition is skewed to low complexity. Residues Thr-99 to Lys-140 form a disordered region. The next 7 helical transmembrane spans lie at Leu-163–Leu-183, Met-245–Trp-267, Thr-279–Gly-299, Ala-303–Leu-323, Ser-352–Phe-372, Val-374–Ile-394, and Leu-402–Gln-422.

It belongs to the UbiA prenyltransferase family.

It localises to the mitochondrion membrane. Its function is as follows. Converts protoheme IX and farnesyl diphosphate to heme O. In Dictyostelium discoideum (Social amoeba), this protein is Probable protoheme IX farnesyltransferase, mitochondrial (cox10).